Reading from the N-terminus, the 311-residue chain is Olfactory receptor-like protein OLF1 (311 aa).

The Extracellular portion of the chain corresponds to 1–24 (MDGNYTLVTEFILLGFPTRPELQI). Asparagine 4 carries an N-linked (GlcNAc...) asparagine glycan. A helical transmembrane segment spans residues 25-48 (VLFLVFLTLYGIILTGNIGLMMLI). At 49 to 56 (RTDPHLQT) the chain is on the cytoplasmic side. A helical membrane pass occupies residues 57-78 (PMYFFLSNLSFADLCFSSAIVP). At 79–99 (KMLVNFLSENKSISLYGCALQ) the chain is on the extracellular side. Residues 100–119 (FYFSCAFADTESFILAAMAY) traverse the membrane as a helical segment. Residues 120 to 138 (DRYVAICNPLLYTVVMSRG) are Cytoplasmic-facing. The chain crosses the membrane as a helical span at residues 139-157 (ICVWLIVLSYIGGNMSSLV). Over 158–195 (HTSFAFILKYCDKNVINHFFCDLPPLLKLSCTDTSVNE) the chain is Extracellular. The helical transmembrane segment at 196–218 (WLLSTYGSSVEIFCFIVIVISYY) threads the bilayer. Topologically, residues 219–235 (FILRSVLRIRSSSGRKK) are cytoplasmic. A helical membrane pass occupies residues 236–259 (TFSTCASHLTSVAIYQGTLLFIYS). The Extracellular segment spans residues 260–271 (RPTYLYTPNTDK). The helical transmembrane segment at 272–291 (IISVFYTIIIPVLNPLIYSL) threads the bilayer. The Cytoplasmic segment spans residues 292–311 (RNKDVKDAAKRAVRLKVDSS).

This sequence belongs to the G-protein coupled receptor 1 family.

It is found in the cell membrane. Functionally, putative odorant or sperm cell receptor. The chain is Olfactory receptor-like protein OLF1 from Canis lupus familiaris (Dog).